A 326-amino-acid polypeptide reads, in one-letter code: Protein phosphatase 1 regulatory subunit SDS22 homolog (326 aa).

The interval 1 to 22 is disordered; sequence MSNDKSAEVVVLPRENDEESKE. LRR repeat units follow at residues 35-57, 58-80, 81-102, 103-126, 128-146, 147-170, 172-190, 191-212, 213-236, 238-256, 257-280, and 281-304; these read DIDS…LTGF, PKIE…ISSL, VTLT…LESL, VNLV…KLTK, ETLY…LEAL, TQLK…HLVN, DELF…VETL, QKLS…VEQL, NNLK…PLTN, LLLD…VERL, ESLN…QLSK, and LKGL…QYRR.

This sequence belongs to the SDS22 family.

The protein resides in the nucleus. Its function is as follows. Regulatory subunit of protein phosphatase 1. The chain is Protein phosphatase 1 regulatory subunit SDS22 homolog (sds-22) from Caenorhabditis elegans.